The primary structure comprises 479 residues: MAQHTVYFPDAFLTQMREAMPSTLSFDDFLAACQRPLRRSIRVNTLKISVADFLQLTAPYGWTLTPIPWCEEGFWIERDDEDALPLGSTAEHLSGLFYIQEASSMLPVAALFADGNAPQRVMDVAAAPGSKTTQIAARMNNEGAILANEFSASRVKVLHANISRCGISNVALTHFDGRVFGAAVPEMFDAILLDAPCSGEGVVRKDPDALKNWSPESNQEIAATQRELIDSAFHALRPGGTLVYSTCTLNREENEAVCLWLKETYPDAVEFLPLGDLFPGANKALTEEGFLHVFPQIYDCEGFFVARLRKTQAIPVLPAPKYKVGNFPFSPVKDREAGQIRQAAAGVGLNWDGNLRLWQRDKELWLFPVGIEALIGKVRFSRLGIKLAETHNKGYRWQHEAVIALASPDNVNAFELTPQEAEEWYRGRDVYPQAAPVADDVLVTFQHQPIGLAKRIGSRLKNSYPRELVRDGKLFTGNA.

Residues 125–131, Glu149, Asp176, and Asp194 each bind S-adenosyl-L-methionine; that span reads AAAPGSK. Residue Cys247 is the Nucleophile of the active site.

The protein belongs to the class I-like SAM-binding methyltransferase superfamily. RsmB/NOP family.

It localises to the cytoplasm. The enzyme catalyses cytidine(1407) in 16S rRNA + S-adenosyl-L-methionine = 5-methylcytidine(1407) in 16S rRNA + S-adenosyl-L-homocysteine + H(+). Functionally, specifically methylates the cytosine at position 1407 (m5C1407) of 16S rRNA. The chain is Ribosomal RNA small subunit methyltransferase F from Escherichia coli (strain SMS-3-5 / SECEC).